Reading from the N-terminus, the 501-residue chain is L-arabinose isomerase (501 aa).

Glu306, Glu333, His350, and His449 together coordinate Mn(2+).

Belongs to the arabinose isomerase family. It depends on Mn(2+) as a cofactor.

The enzyme catalyses beta-L-arabinopyranose = L-ribulose. Its pathway is carbohydrate degradation; L-arabinose degradation via L-ribulose; D-xylulose 5-phosphate from L-arabinose (bacterial route): step 1/3. Its function is as follows. Catalyzes the conversion of L-arabinose to L-ribulose. This is L-arabinose isomerase from Mycolicibacterium smegmatis (strain ATCC 700084 / mc(2)155) (Mycobacterium smegmatis).